Reading from the N-terminus, the 929-residue chain is Alanine--tRNA ligase (929 aa).

Residues His-619, His-623, Cys-722, and His-726 each coordinate Zn(2+).

It belongs to the class-II aminoacyl-tRNA synthetase family. Zn(2+) is required as a cofactor.

Its subcellular location is the cytoplasm. The enzyme catalyses tRNA(Ala) + L-alanine + ATP = L-alanyl-tRNA(Ala) + AMP + diphosphate. Functionally, catalyzes the attachment of alanine to tRNA(Ala) in a two-step reaction: alanine is first activated by ATP to form Ala-AMP and then transferred to the acceptor end of tRNA(Ala). Also edits incorrectly charged Ser-tRNA(Ala) and Gly-tRNA(Ala) via its editing domain. The polypeptide is Alanine--tRNA ligase (Halobacterium salinarum (strain ATCC 29341 / DSM 671 / R1)).